We begin with the raw amino-acid sequence, 204 residues long: MIGKLKGTIDEIGEDYVLVDVQGVCYVAYCSARTLSKLGSAGEACVLFIETYVREDQLKLFGFMTALEREWFNLLQSVQGVGAKVALAVLSTLTPGELANAIALQDRAAVSRAPGVGPKVAMRLVTELKNRAPAYAGEAINIALKRELGEGVAAAPVADAVSALTNLGYSRDQAANAVAAAMKTAGEGADSAKLIRLGLKELAR.

Positions 1 to 64 are domain I; the sequence is MIGKLKGTID…EDQLKLFGFM (64 aa). The interval 65-143 is domain II; sequence TALEREWFNL…AYAGEAINIA (79 aa). Positions 144 to 151 are flexible linker; sequence LKRELGEG. Residues 152–204 form a domain III region; that stretch reads VAAAPVADAVSALTNLGYSRDQAANAVAAAMKTAGEGADSAKLIRLGLKELAR.

This sequence belongs to the RuvA family. In terms of assembly, homotetramer. Forms an RuvA(8)-RuvB(12)-Holliday junction (HJ) complex. HJ DNA is sandwiched between 2 RuvA tetramers; dsDNA enters through RuvA and exits via RuvB. An RuvB hexamer assembles on each DNA strand where it exits the tetramer. Each RuvB hexamer is contacted by two RuvA subunits (via domain III) on 2 adjacent RuvB subunits; this complex drives branch migration. In the full resolvosome a probable DNA-RuvA(4)-RuvB(12)-RuvC(2) complex forms which resolves the HJ.

Its subcellular location is the cytoplasm. In terms of biological role, the RuvA-RuvB-RuvC complex processes Holliday junction (HJ) DNA during genetic recombination and DNA repair, while the RuvA-RuvB complex plays an important role in the rescue of blocked DNA replication forks via replication fork reversal (RFR). RuvA specifically binds to HJ cruciform DNA, conferring on it an open structure. The RuvB hexamer acts as an ATP-dependent pump, pulling dsDNA into and through the RuvAB complex. HJ branch migration allows RuvC to scan DNA until it finds its consensus sequence, where it cleaves and resolves the cruciform DNA. This Rhizobium etli (strain ATCC 51251 / DSM 11541 / JCM 21823 / NBRC 15573 / CFN 42) protein is Holliday junction branch migration complex subunit RuvA.